We begin with the raw amino-acid sequence, 38 residues long: MKVRASVKKRSPECKIVRRKGRLYVINKKNPRFKQRQG.

It belongs to the bacterial ribosomal protein bL36 family.

This is Large ribosomal subunit protein bL36 from Flavobacterium psychrophilum (strain ATCC 49511 / DSM 21280 / CIP 103535 / JIP02/86).